The chain runs to 545 residues: MKLAEALLRALKDRGAQAMFGIPGDFALPFFKVAEETQILPLHTLSHEPAVGFAADAAARYSSTLGVAAVTYGAGAFNMVNAVAGAYAEKSPVVVISGAPGTTEGNAGLLLHHQGRTLDTQFQVFKEITVAQARLDDPAKAPAEIARVLGAARALSRPVYLEIPRNMVNAEVEPVGDDPAWPVDRDALAACADEVLAAMRSATSPVLMVCVEVRRYGLEAKVAELAQRLGVPVVTTFMGRGLLADAPTPPLGTYIGVAGDAEITRLVEESDGLFLLGAILSDTNFAVSQRKIDLRKTIHAFDRAVTLGYHTYADIPLAGLVDALLEGLPPSDRTTRGKEPHAYPTGLQADGEPIAPMDIARAVNDRVRAGQEPLLIAADMGDCLFTAMDMIDAGLMAPGYYAGMGFGVPAGIGAQCVSGGKRILTVVGDGAFQMTGWELGNCRRLGIDPIVILFNNASWEMLRTFQPESAFNDLDDWRFADMAAGMGGDGVRVRTRAELKAALDKAFATRGRFQLIEAMIPRGVLSDTLARFVQGQKRLHAAPRE.

Glu48 lines the thiamine diphosphate pocket. The segment at 382 to 460 (DCLFTAMDMI…VILFNNASWE (79 aa)) is thiamine pyrophosphate binding. Positions 429 and 456 each coordinate Mg(2+).

It belongs to the TPP enzyme family. Requires a metal cation as cofactor. Thiamine diphosphate is required as a cofactor.

It carries out the reaction indole-3-pyruvate + H(+) = indole-3-acetaldehyde + CO2. It participates in plant hormone metabolism; auxin biosynthesis. The polypeptide is Indole-3-pyruvate decarboxylase (ipdC) (Azospirillum brasilense).